The primary structure comprises 113 residues: Flagellar hook-basal body complex protein FliE (113 aa).

Belongs to the FliE family.

It localises to the bacterial flagellum basal body. The protein is Flagellar hook-basal body complex protein FliE of Rhizobium etli (strain CIAT 652).